The chain runs to 281 residues: sn-glycerol-3-phosphate transport system permease protein UgpE (281 aa).

The next 6 helical transmembrane spans lie at 16–36, 85–105, 113–133, 142–162, 202–222, and 247–267; these read LILGIAVILFPLYVAFVAATL, FSITLGKITVSMLSAFAIVWF, FFWMIFITLMLPVEVRIFPTV, LDSYAGLTLPLMASATATFLF, ALFVITFIYGWNQYLWPLLII, and WNSVMVAMLLTLIPPVVIVLV. Positions 77-268 constitute an ABC transmembrane type-1 domain; the sequence is LLNSFVMAFS…IPPVVIVLVM (192 aa).

This sequence belongs to the binding-protein-dependent transport system permease family. UgpAE subfamily. The complex is composed of two ATP-binding proteins (UgpC), two transmembrane proteins (UgpA and UgpE) and a solute-binding protein (UgpB).

It localises to the cell inner membrane. Functionally, part of the ABC transporter complex UgpBAEC involved in sn-glycerol-3-phosphate (G3P) import. Probably responsible for the translocation of the substrate across the membrane. Can also transport glycerophosphoryl diesters, which are hydrolyzed to G3P and alcohol during transport. The G3P moiety can be detected in the cytoplasm whereas the corresponding alcohol is usually found in the culture medium. It was proposed by Yang et al that the complex could also transport glycerol-2-phosphate (G2P) in vivo, but it was shown later by Wuttge et al that UgpB does not bind G2P, questioning this transport activity. G2P might be converted in the periplasm to G3P before its transport. The protein is sn-glycerol-3-phosphate transport system permease protein UgpE of Escherichia coli (strain K12).